Reading from the N-terminus, the 852-residue chain is Protein SBE22 (852 aa).

The tract at residues 1 to 158 is disordered; that stretch reads MTSIQERGTS…ADKSKINTFP (158 aa). A compositionally biased stretch (basic and acidic residues) spans 15–26; the sequence is SLKEGEASDRSS. Residues 43–61 are compositionally biased toward polar residues; the sequence is PPSQTTLGRSRAGSNTMNK. Position 72 is a phosphoserine (serine 72). The segment covering 74 to 96 has biased composition (polar residues); that stretch reads NLLSNMNCSDNGNGGNMLNSFVN. The segment covering 124-139 has biased composition (low complexity); it reads TTEVFSSTSASSSLGD. At serine 201 the chain carries Phosphoserine. Residues 206–248 are disordered; the sequence is AAEKTMNKSRHSYQEQFSSKKSQSSLLNSKQRSRAKSQTCSST. Low complexity predominate over residues 224–235; that stretch reads SKKSQSSLLNSK. Phosphoserine is present on residues serine 459, serine 517, and serine 520.

The protein belongs to the SBE2 family.

It is found in the cytoplasm. It localises to the golgi apparatus. Its function is as follows. With SBE2, is involved in cell wall integrity and polarity processes like bud growth, through the transport of CHS3 and UTR2 to sites of growth. In Saccharomyces cerevisiae (strain YJM789) (Baker's yeast), this protein is Protein SBE22 (SBE22).